Here is a 380-residue protein sequence, read N- to C-terminus: Probable inorganic pyrophosphatase (380 aa).

Mg(2+) contacts are provided by aspartate 198, aspartate 203, and aspartate 235.

The protein belongs to the PPase family. Requires Mg(2+) as cofactor.

The enzyme catalyses diphosphate + H2O = 2 phosphate + H(+). This is Probable inorganic pyrophosphatase from Plasmodium falciparum (isolate 3D7).